A 335-amino-acid chain; its full sequence is Aspartate carbamoyltransferase catalytic subunit (335 aa).

Carbamoyl phosphate is bound by residues R54 and T55. An L-aspartate-binding site is contributed by K82. The carbamoyl phosphate site is built by R104, H134, and Q137. L-aspartate-binding residues include R177 and R232. Carbamoyl phosphate-binding residues include G277 and P278.

This sequence belongs to the aspartate/ornithine carbamoyltransferase superfamily. ATCase family. As to quaternary structure, heterododecamer (2C3:3R2) of six catalytic PyrB chains organized as two trimers (C3), and six regulatory PyrI chains organized as three dimers (R2).

It catalyses the reaction carbamoyl phosphate + L-aspartate = N-carbamoyl-L-aspartate + phosphate + H(+). The protein operates within pyrimidine metabolism; UMP biosynthesis via de novo pathway; (S)-dihydroorotate from bicarbonate: step 2/3. Functionally, catalyzes the condensation of carbamoyl phosphate and aspartate to form carbamoyl aspartate and inorganic phosphate, the committed step in the de novo pyrimidine nucleotide biosynthesis pathway. The chain is Aspartate carbamoyltransferase catalytic subunit from Paenarthrobacter aurescens (strain TC1).